The chain runs to 324 residues: Beta-ketoacyl-[acyl-carrier-protein] synthase III (324 aa).

Catalysis depends on residues Cys-114 and His-251. Residues 252-256 (QANLR) form an ACP-binding region. Residue Asn-281 is part of the active site.

This sequence belongs to the thiolase-like superfamily. FabH family. Homodimer.

It localises to the cytoplasm. The catalysed reaction is malonyl-[ACP] + acetyl-CoA + H(+) = 3-oxobutanoyl-[ACP] + CO2 + CoA. The protein operates within lipid metabolism; fatty acid biosynthesis. Functionally, catalyzes the condensation reaction of fatty acid synthesis by the addition to an acyl acceptor of two carbons from malonyl-ACP. Catalyzes the first condensation reaction which initiates fatty acid synthesis and may therefore play a role in governing the total rate of fatty acid production. Possesses both acetoacetyl-ACP synthase and acetyl transacylase activities. Its substrate specificity determines the biosynthesis of branched-chain and/or straight-chain of fatty acids. This chain is Beta-ketoacyl-[acyl-carrier-protein] synthase III, found in Rhodobacter capsulatus (Rhodopseudomonas capsulata).